Here is a 761-residue protein sequence, read N- to C-terminus: Proline-rich extensin-like protein EPR1 (761 aa).

Residues 1 to 24 (MRVPLIDFLRFLVLILSLSGASVA) form the signal peptide. Residues 63–77 (YSPPIYPPPIQKPPT) form a 1; degenerate repeat. The 40 X 17 AA approximate tandem repeats of Y-S-P-P-[IV]-[KY]-P-P-P-x(1,2)-K-P-P-T-P-T stretch occupies residues 63–735 (YSPPIYPPPI…PPVQVPPTPT (673 aa)). 39 tandem repeats follow at residues 78 to 94 (YSPPIYPPPIQKPPTPT), 95 to 111 (YSPPIYPPPIQKPPTPT), 112 to 128 (YSPPIYPPPIQKPPTPT), 129 to 145 (YSPPIYPPPIQKPPTPS), 146 to 162 (YSPPVKPPPVQMPPTPT), 163 to 179 (YSPPIKPPPVHKPPTPT), 180 to 195 (YSPPIKPPVHKPPTPI), 196 to 212 (YSPPIKPPPVHKPPTPI), 213 to 229 (YSPPIKPPPVHKPPTPT), 230 to 246 (YSPPVKPPPVHKPPTPI), 247 to 263 (YSPPIKPPPVHKPPTPI), 264 to 280 (YSPPVKPPPVQTPPTPI), 281 to 297 (YSPPVKPPPVHKPPTPT), 298 to 314 (YSPPVKSPPVQKPPTPT), 315 to 331 (YSPPIKPPPVQKPPTPT), 332 to 347 (YSPPIKPPPVKPPTPI), 348 to 364 (YSPPVKPPPVHKPPTPI), 365 to 381 (YSPPVKPPPVHKPPTPI), 382 to 398 (YSPPVKPPPIQKPPTPT), 399 to 415 (YSPPIKPPPLQKPPTPT), 416 to 431 (YSPPIKLPPVKPPTPI), 432 to 448 (YSPPVKPPPVHKPPTPI), 449 to 465 (YSPPVKPPPVHKPPTPT), 466 to 481 (YSPPIKPPPVKPPTPT), 482 to 498 (YSPPVQPPPVQKPPTPT), 499 to 515 (YSPPVKPPPIQKPPTPT), 516 to 531 (YSPPIKPPPVKPPTPT), 532 to 548 (YSPPIKPPPVHKPPTPT), 549 to 565 (YSPPIKPPPIHKPPTPT), 566 to 582 (YSPPIKPPPVHKPPTPT), 583 to 599 (YSPPIKPPPVHKPPTPT), 600 to 616 (YSPPIKPPPVHKPPTPT), 617 to 633 (YSPPIKPPPVHKPPTPT), 634 to 650 (YSPPIKPPPVHKPPTPT), 651 to 667 (YSPPIKPPPVQKPPTPT), 668 to 684 (YSPPVKPPPVQLPPTPT), 685 to 701 (YSPPVKPPPVQVPPTPT), 702 to 718 (YSPPVKPPPVQVPPTPT), and 719 to 735 (YSPPIKPPPVQVPPTPT). Pro residues predominate over residues 111–750 (TYSPPIYPPP…QGGYGTPPPY (640 aa)). Residues 111–761 (TYSPPIYPPP…YLSHPIDIRN (651 aa)) are disordered.

Belongs to the extensin family. As to expression, specifically expressed in endosperm during seed germination, at the site of radicle protrusion.

The protein resides in the secreted. It is found in the primary cell wall. In terms of biological role, may have a specific role in modifying the cell-wall structure, specifically during seed germination, thus facilitating radicle protrusion. This is Proline-rich extensin-like protein EPR1 (EPR1) from Arabidopsis thaliana (Mouse-ear cress).